Reading from the N-terminus, the 181-residue chain is Trans-acting factor D (181 aa).

In terms of biological role, plays a role in 2-micron plasmid partitioning. Antagonizes transcriptional repression of recombinase FLP by REP1-REP2. Regulates both stability and copy number of the plasmid by blocking the formation of the REP1-REP2 repressor complex. The sequence is that of Trans-acting factor D from Saccharomyces cerevisiae (strain ATCC 204508 / S288c) (Baker's yeast).